We begin with the raw amino-acid sequence, 487 residues long: 4-alpha-glucanotransferase (487 aa).

Belongs to the disproportionating enzyme family.

Its subcellular location is the cytoplasm. The catalysed reaction is Transfers a segment of a (1-&gt;4)-alpha-D-glucan to a new position in an acceptor, which may be glucose or a (1-&gt;4)-alpha-D-glucan.. Catalyzes a disproportionation reaction in which single or multiple glucose units from oligosaccharides are transferred to the 4-hydroxyl group of acceptor sugars. Glucose, maltose and maltotriose can act as acceptor, whereas of the three only maltotriose can act as donor. The polypeptide is 4-alpha-glucanotransferase (malQ) (Clostridium butyricum).